The primary structure comprises 193 residues: CASP-like protein 1E1 (193 aa).

The Cytoplasmic segment spans residues methionine 1–cysteine 30. A helical transmembrane segment spans residues aspartate 31–valine 51. Residues aspartate 52–serine 86 are Extracellular-facing. A helical transmembrane segment spans residues valine 87–glycine 107. Topologically, residues lysine 108 to serine 113 are cytoplasmic. Residues isoleucine 114–leucine 134 traverse the membrane as a helical segment. The Extracellular portion of the chain corresponds to alanine 135 to glutamine 162. Residues valine 163–isoleucine 183 form a helical membrane-spanning segment. The Cytoplasmic segment spans residues threonine 184–lysine 193.

It belongs to the Casparian strip membrane proteins (CASP) family. In terms of assembly, homodimer and heterodimers.

Its subcellular location is the cell membrane. This Populus trichocarpa (Western balsam poplar) protein is CASP-like protein 1E1.